The sequence spans 446 residues: Methanol utilization control sensor protein MoxY (446 aa).

Helical transmembrane passes span 1 to 21, 101 to 121, and 144 to 164; these read MGLACAVSLSLCLIVSAILIV, WFSALMTPPLVEALVPITHYP, and FSIILPVLFLAGLAMVGLAFL. Positions 167-219 constitute an HAMP domain; the sequence is TLLTRRLQSVQAAMAQMQDGRLSVRAPDDRLTEFADLAAGVNALASHLQAEQA. The segment at 390–409 is disordered; the sequence is TDNGKGPQSGTGRPTPGFGQ.

The protein localises to the cell inner membrane. Functionally, member of the two-component regulatory system MoxY/MoxX probably involved in the regulation of the methanol dehydrogenase expression. May function as a membrane-associated protein kinase that phosphorylates MoxX in response to environmental signals. The chain is Methanol utilization control sensor protein MoxY (moxY) from Paracoccus denitrificans.